We begin with the raw amino-acid sequence, 298 residues long: Tyrosine recombinase XerD (298 aa).

Residues 2–87 (KQELARIEQF…AVRRLFQYLY (86 aa)) form the Core-binding (CB) domain. Positions 108–292 (RLPKDLSEAQ…ATERLRQLHQ (185 aa)) constitute a Tyr recombinase domain. Catalysis depends on residues R148, K172, H244, R247, and H270. The O-(3'-phospho-DNA)-tyrosine intermediate role is filled by Y279.

It belongs to the 'phage' integrase family. XerD subfamily. Forms a cyclic heterotetrameric complex composed of two molecules of XerC and two molecules of XerD, in which XerC interacts with XerD via its C-terminal region, XerD interacts with XerC via its C-terminal region and so on.

The protein localises to the cytoplasm. FtsK may regulate the catalytic switch between XerC and XerD in the heterotetrameric complex during the two steps of the recombination process. Functionally, site-specific tyrosine recombinase, which acts by catalyzing the cutting and rejoining of the recombining DNA molecules. Binds cooperatively to specific DNA consensus sequences that are separated from XerC binding sites by a short central region, forming the heterotetrameric XerC-XerD complex that recombines DNA substrates. The complex is essential to convert dimers of the bacterial chromosome into monomers to permit their segregation at cell division. It also contributes to the segregational stability of plasmids. In the complex XerD specifically exchanges the bottom DNA strands. The sequence is that of Tyrosine recombinase XerD from Shigella flexneri.